Reading from the N-terminus, the 340-residue chain is S-adenosylmethionine:tRNA ribosyltransferase-isomerase (340 aa).

This sequence belongs to the QueA family. In terms of assembly, monomer.

The protein resides in the cytoplasm. The enzyme catalyses 7-aminomethyl-7-carbaguanosine(34) in tRNA + S-adenosyl-L-methionine = epoxyqueuosine(34) in tRNA + adenine + L-methionine + 2 H(+). It functions in the pathway tRNA modification; tRNA-queuosine biosynthesis. Transfers and isomerizes the ribose moiety from AdoMet to the 7-aminomethyl group of 7-deazaguanine (preQ1-tRNA) to give epoxyqueuosine (oQ-tRNA). The polypeptide is S-adenosylmethionine:tRNA ribosyltransferase-isomerase (Macrococcus caseolyticus (strain JCSC5402) (Macrococcoides caseolyticum)).